Reading from the N-terminus, the 67-residue chain is Phycobilisome 7.8 kDa linker polypeptide, allophycocyanin-associated, core (67 aa).

In terms of domain architecture, CpcD-like spans 1 to 56 (MRMFRITACVPSQTRIRTQRELQNTYFTKLVPYDNSFREQQRIMKMGGKIVKVELA).

It belongs to the phycobilisome linker protein family.

The protein resides in the cellular thylakoid membrane. Functionally, rod linker protein, associated with allophycocyanin. Linker polypeptides determine the state of aggregation and the location of the disk-shaped phycobiliprotein units within the phycobilisome and modulate their spectroscopic properties in order to mediate a directed and optimal energy transfer. The chain is Phycobilisome 7.8 kDa linker polypeptide, allophycocyanin-associated, core (apcC) from Synechocystis sp. (strain ATCC 27184 / PCC 6803 / Kazusa).